The sequence spans 1122 residues: MARSPGDRCALLLLVQLLAVVCLDFGNGLHLEVFSPRNEGKPFPKHTHLVRQKRAWITAPVALREGEDLSRKNPIAKIHSDLAEEKGIKITYKYTGKGITEPPFGIFVFDRNTGELNITSILDREETPYFLLTGYALDSRGNNLEKPLELRIKVLDINDNEPVFTQEVFVGSIEELSAAHTLVMKITATDADDPETLNAKVSYRIVSQEPANSHMFYLNKDTGEIYTTSFTLDREEHSSYSLTVEARDGNGQITDKPVQQAQVQIRILDVNDNIPVVENKMYEGTVEENQVNVEVMRIKVTDADEVGSDNWLANFTFASGNEGGYFHIETDTQTNEGIVTLVKEVDYEEMKKLDLSIIVTNKAAFHKSILSKYKATPIPITVKVKNVVEGIHFKSSVVSFRASEAMDRSSLSRSIGNFQVFDEDTGQAAKVTYVKVQDTDNWVSVDSVTSEIKLVKIPDFESRYVQNGTYTAKVVAISKEHPQKTITGTIVITVEDVNDNCPVLVDSVRSVCEDEPYVNVTAEDLDGAQNSAPFSFSIIDQPPGTAQKWKITHQESTSVLLQQSERKRGRSEIPFLISDSQGFSCPERQVLQLTVCECLKGGGCVAAQYDNYVGLGPAAIALMILALLLLLLVPLLLLICHCGGGAKGFTPIPGTIEMLHPWNNEGAPPEDKVVPSLLVADHAESSAVRGGVGGAMLKEGMMKGSSSASVTKGQHELSEVDGRWEEHRSLLTAGATHHVRTAGTIAANEAVRTRATGSSRDMSGARGAVAVNEEFLRSYFTEKAASYNGEDDLHMAKDCLLVYSQEDTASLRGSVGCCSFIEGELDDLFLDDLGLKFKTLAEVCLGRKIDLDVDIEQRQKPVREASVSAASGSHYEQAVTSSESAYSSNTGFPAPKPLHEVHTEKVTQEIVTESSVSSRQSQKVVPPPDPVASGNIIVTETSYAKGSAVPPSTVLLAPRQPQSLIVTERVYAPTSTLVDQHYANEEKVLVTERVIQPNGGIPKPLEVTQHLKDAQYVMVRERESILAPSSGVQPTLAMPSVAAGGQNVTVTERILTPASTLQSSYQIPSETSITARNTVLSSVGSIGPLPNLDLEESDRPNSTITTSSTRVTKHSTMQHSYS.

A signal peptide spans 1–28; it reads MARSPGDRCALLLLVQLLAVVCLDFGNG. The propeptide occupies 29–54; it reads LHLEVFSPRNEGKPFPKHTHLVRQKR. 4 Cadherin domains span residues 55–164, 165–277, 278–398, and 397–504; these read AWIT…EPVF, TQEV…IPVV, ENKM…SSVV, and VVSF…CPVL. Topologically, residues 55 to 618 are extracellular; sequence AWITAPVALR…YDNYVGLGPA (564 aa). An N-linked (GlcNAc...) asparagine glycan is attached at N117. N314, N467, and N519 each carry an N-linked (GlcNAc...) asparagine glycan. A helical transmembrane segment spans residues 619–639; it reads AIALMILALLLLLLVPLLLLI. Topologically, residues 640–1122 are cytoplasmic; sequence CHCGGGAKGF…KHSTMQHSYS (483 aa). A phosphoserine mark is found at S685, S706, S709, and S729. T808 is modified (phosphothreonine). 3 positions are modified to phosphoserine: S810, S814, and S819. Desmoglein repeat repeat units follow at residues 885–916, 917–945, 946–971, 972–995, 996–1024, and 1025–1055; these read AYSSNTGFPAPKPLHEVHTEKVTQEIVTESSV, SSRQSQKVVPPPDPVASGNIIVTETSYAK, GSAVPPSTVLLAPRQPQSLIVTERVY, APTSTLVDQHYANEEKVLVTERVI, QPNGGIPKPLEVTQHLKDAQYVMVRERES, and ILAPSSGVQPTLAMPSVAAGGQNVTVTERIL. Residues 913–932 form a disordered region; that stretch reads ESSVSSRQSQKVVPPPDPVA. Residues 914-924 show a composition bias toward low complexity; sequence SSVSSRQSQKV. Residues 1089–1122 are disordered; it reads LPNLDLEESDRPNSTITTSSTRVTKHSTMQHSYS. The span at 1100-1122 shows a compositional bias: polar residues; it reads PNSTITTSSTRVTKHSTMQHSYS. S1122 carries the post-translational modification Phosphoserine.

Interacts with PKP2. Interacts with CTNNB1; the interaction promotes localization of CTNNB1 at cell junctions thus reducing its nuclear localization and subsequent transcription of CTNNB1/TCF-target genes. Palmitoylated by ZDHHC5 at the plasma membrane. As to expression, expressed in undifferentiated pluripotent stem cells, expression decreases during differentiation (at protein level). Expressed by embryonic stem cells, expression is reduced during differentiation (at protein level). Expressed at the apical-lateral cell membrane of kidney tubular epithelial cells (at protein level). Expressed in epidermis and heart (at protein level). Expressed in the brain, spleen, lung, liver skeletal muscle, kidney and testis.

It is found in the cell membrane. It localises to the cell junction. The protein localises to the desmosome. The protein resides in the cytoplasm. Its function is as follows. A component of desmosome cell-cell junctions which are required for positive regulation of cellular adhesion. Involved in the interaction of plaque proteins and intermediate filaments mediating cell-cell adhesion. Required for proliferation and viability of embryonic stem cells in the blastocyst, thereby crucial for progression of post-implantation embryonic development. Maintains pluripotency by regulating epithelial to mesenchymal transition/mesenchymal to epithelial transition (EMT/MET) via interacting with and sequestering CTNNB1 to sites of cell-cell contact, thereby reducing translocation of CTNNB1 to the nucleus and subsequent transcription of CTNNB1/TCF-target genes. Promotes pluripotency and the multi-lineage differentiation potential of hematopoietic stem cells. Plays a role in endothelial cell sprouting and elongation via mediating the junctional-association of cortical actin fibers and CDH5. Plays a role in limiting inflammatory infiltration and the apoptotic response to injury in kidney tubular epithelial cells, potentially via its role in maintaining cell-cell adhesion and the epithelial barrier. This is Desmoglein-2 (Dsg2) from Mus musculus (Mouse).